Reading from the N-terminus, the 969-residue chain is Leucine--tRNA ligase (969 aa).

A 'HIGH' region motif is present at residues proline 78–histidine 89. A 'KMSKS' region motif is present at residues lysine 739 to serine 743. Lysine 742 provides a ligand contact to ATP.

Belongs to the class-I aminoacyl-tRNA synthetase family.

The protein resides in the cytoplasm. It catalyses the reaction tRNA(Leu) + L-leucine + ATP = L-leucyl-tRNA(Leu) + AMP + diphosphate. The chain is Leucine--tRNA ligase from Mycobacterium tuberculosis (strain ATCC 25177 / H37Ra).